Here is a 309-residue protein sequence, read N- to C-terminus: Short-chain dehydrogenase/reductase ARMGADRAFT_1048226 (309 aa).

Positions 64, 86, 113, and 145 each coordinate NADP(+). S167 serves as the catalytic Proton donor. NADP(+) is bound by residues Y196 and K200. Y196 functions as the Proton acceptor in the catalytic mechanism. K200 (lowers pKa of active site Tyr) is an active-site residue.

The protein belongs to the short-chain dehydrogenases/reductases (SDR) family.

It functions in the pathway secondary metabolite biosynthesis. Short-chain dehydrogenase/reductase, part of the gene cluster that mediates the biosynthesis of melleolides, a range of antifungal and phytotoxic polyketide derivatives composed of an orsellinic acid (OA) moiety esterified to various sesquiterpene alcohols. The first step in melleolides biosynthesis is performed by the delta(6)-protoilludene synthase PRO1 which catalyzes the cyclization of farnesyl diphosphate to protoilludene. The orsellinic acid synthase armB produces OA by condensing acetyl-CoA with 3 malonyl-CoA units in a three-round chain elongation reaction folowed by a C2-C7 ring closure. ArmB further catalyzes the trans-esterification of OA to the various sesquiterpene alcohols resulting from the hydroxylation of protoilludene. The melleolides cluster also includes 5 cytochrome P450 monooxygenases, 4 NAD(+)-dependent oxidoreductases, one flavin-dependent oxidoreductase, and one O-methyltransferase. The cytochrome P450 monooxygenases may be involved in protoilludene hydroxylation to elaborate melleolides with multiple alcohol groups, such as melleolide D, which carries alcohol functionalities at C-4, C-5, C-10, and C-13. The role of the NAD(+)-dependent enzymes remains unknown. Numerous melleolides, including arnamial, show 5'-O-methylation of the aromatic moiety which may be catalyzed by the methyltransferase encoded in the cluster. The flavin-dependent oxidoreductase might represent the dehydrogenase yielding the aldehyde in position 1 of arnamial and other melleolides. Finally, several halogenase localized outside of the cluster, are able to catalyze the transfer of a single chlorine atom to the melleolide backbone, resulting in a 6'-chloromelleolide product. This chain is Short-chain dehydrogenase/reductase ARMGADRAFT_1048226, found in Armillaria gallica (Bulbous honey fungus).